The primary structure comprises 544 residues: Bacillolysin (544 aa).

Positions 1-25 are cleaved as a signal peptide; sequence MNKRAMLGAIGLAFGLMAWPFGASA. Residues 26-225 constitute a propeptide, activation peptide; that stretch reads KGKSMVWNEQ…DEAKPGGAQP (200 aa). D285, D287, Q289, and D366 together coordinate Ca(2+). H370 is a Zn(2+) binding site. Residue E371 is part of the active site. Zn(2+) is bound by residues H374 and E394. The Ca(2+) site is built by E405, N411, D413, E415, E418, Y421, T422, V425, and D428. H459 functions as the Proton donor in the catalytic mechanism.

The protein belongs to the peptidase M4 family. The cofactor is Ca(2+). It depends on Zn(2+) as a cofactor.

The protein resides in the secreted. The catalysed reaction is Similar, but not identical, to that of thermolysin.. Functionally, extracellular zinc metalloprotease. In Bacillus caldolyticus, this protein is Bacillolysin (npr).